Consider the following 65-residue polypeptide: uncharacterized protein (65 aa).

This is an uncharacterized protein from Homo sapiens (Human).